We begin with the raw amino-acid sequence, 381 residues long: MTNFFIPPASVIGRGAVKEVGTRLKQIGAKKALIVTDAFLHSTGLSEEVAKNIREAGLDVAIFPKAQPDPADTQVHEGVDVFKQENCDALVSIGGGSSHDTAKAIGLVAANGGRINDYQGVNSVEKPVVPVVAITTTAGTGSETTSLAVITDSARKVKMPVIDEKITPTVAIVDPELMVKKPAGLTIATGMDALSHAIEAYVAKGATPVTDAFAIQAMKLINEYLPKAVANGEDIEAREAMAYAQYMAGVAFNNGGLGLVHSISHQVGGVYKLQHGICNSVNMPHVCAFNLIAKTERFAHIAELLGENVSGLSTAAAAERAIVALERYNKNFGIPSGYAEMGVKEEDIELLAKNAFEDVCTQSNPRVATVQDIAQIIKNAL.

The protein belongs to the iron-containing alcohol dehydrogenase family. Homodecamer. Requires Mg(2+) as cofactor. Zn(2+) serves as cofactor.

The protein resides in the cytoplasm. It catalyses the reaction methanol + NAD(+) = formaldehyde + NADH + H(+). The protein operates within one-carbon metabolism; methanol degradation; formaldehyde from methanol: step 1/1. With respect to regulation, stimulated by the activator protein Act which requires the presence of magnesium ions. Inhibited by 1,10-phenanthroline. Its function is as follows. Catalyzes the oxidation of methanol to yield formaldehyde. It possesses a NADH-dependent formaldehyde reductase activity and cannot use NADP. This chain is NAD-dependent methanol dehydrogenase, found in Bacillus methanolicus.